We begin with the raw amino-acid sequence, 313 residues long: Ribosomal RNA small subunit methyltransferase H (313 aa).

S-adenosyl-L-methionine is bound by residues 35-37, Asp55, Phe80, Asp102, and Gln109; that span reads GGH.

It belongs to the methyltransferase superfamily. RsmH family.

Its subcellular location is the cytoplasm. The enzyme catalyses cytidine(1402) in 16S rRNA + S-adenosyl-L-methionine = N(4)-methylcytidine(1402) in 16S rRNA + S-adenosyl-L-homocysteine + H(+). Its function is as follows. Specifically methylates the N4 position of cytidine in position 1402 (C1402) of 16S rRNA. The chain is Ribosomal RNA small subunit methyltransferase H from Shewanella violacea (strain JCM 10179 / CIP 106290 / LMG 19151 / DSS12).